The chain runs to 1405 residues: DNA-directed RNA polymerase subunit beta' (1405 aa).

Residues Cys-70, Cys-72, Cys-85, and Cys-88 each contribute to the Zn(2+) site. Mg(2+)-binding residues include Asp-460, Asp-462, and Asp-464. The Zn(2+) site is built by Cys-814, Cys-888, Cys-895, and Cys-898.

It belongs to the RNA polymerase beta' chain family. In terms of assembly, the RNAP catalytic core consists of 2 alpha, 1 beta, 1 beta' and 1 omega subunit. When a sigma factor is associated with the core the holoenzyme is formed, which can initiate transcription. Mg(2+) serves as cofactor. Requires Zn(2+) as cofactor.

It carries out the reaction RNA(n) + a ribonucleoside 5'-triphosphate = RNA(n+1) + diphosphate. In terms of biological role, DNA-dependent RNA polymerase catalyzes the transcription of DNA into RNA using the four ribonucleoside triphosphates as substrates. This Shewanella baltica (strain OS223) protein is DNA-directed RNA polymerase subunit beta'.